A 290-amino-acid chain; its full sequence is Acetyl-coenzyme A carboxylase carboxyl transferase subunit beta (290 aa).

One can recognise a CoA carboxyltransferase N-terminal domain in the interval 27–290 (LWHKCPSCEA…FTHSPSPVSA (264 aa)). Positions 31, 34, 50, and 53 each coordinate Zn(2+). A C4-type zinc finger spans residues 31–53 (CPSCEAVLYRPELEKTLDVCPKC).

The protein belongs to the AccD/PCCB family. As to quaternary structure, acetyl-CoA carboxylase is a heterohexamer composed of biotin carboxyl carrier protein (AccB), biotin carboxylase (AccC) and two subunits each of ACCase subunit alpha (AccA) and ACCase subunit beta (AccD). The cofactor is Zn(2+).

It localises to the cytoplasm. The catalysed reaction is N(6)-carboxybiotinyl-L-lysyl-[protein] + acetyl-CoA = N(6)-biotinyl-L-lysyl-[protein] + malonyl-CoA. Its pathway is lipid metabolism; malonyl-CoA biosynthesis; malonyl-CoA from acetyl-CoA: step 1/1. Its function is as follows. Component of the acetyl coenzyme A carboxylase (ACC) complex. Biotin carboxylase (BC) catalyzes the carboxylation of biotin on its carrier protein (BCCP) and then the CO(2) group is transferred by the transcarboxylase to acetyl-CoA to form malonyl-CoA. The chain is Acetyl-coenzyme A carboxylase carboxyl transferase subunit beta from Pseudomonas paraeruginosa (strain DSM 24068 / PA7) (Pseudomonas aeruginosa (strain PA7)).